The chain runs to 831 residues: AMP deaminase (831 aa).

Disordered regions lie at residues 26–45 (NPGANRDEEVAAAPSSQDTP), 66–110 (NGTQ…KLLN), and 130–149 (NAVVSSVGGPETDPGNMETT). Residues Ser79 and Ser84 each carry the phosphoserine modification. 2 residues coordinate Zn(2+): His319 and His321. Residues His321 and 390–395 (KFNLKY) each bind substrate. A Zn(2+)-binding site is contributed by His587. Glu590 contributes to the substrate binding site. Catalysis depends on His609, which acts as the Proton acceptor. A Zn(2+)-binding site is contributed by Asp664. 665–668 (DPLQ) lines the substrate pocket. 4 positions are modified to phosphoserine: Ser758, Ser776, Ser780, and Ser782.

It belongs to the metallo-dependent hydrolases superfamily. Adenosine and AMP deaminases family. Homotetramer. Zn(2+) is required as a cofactor.

It localises to the cytoplasm. The catalysed reaction is AMP + H2O + H(+) = IMP + NH4(+). It participates in purine metabolism; IMP biosynthesis via salvage pathway; IMP from AMP: step 1/1. Its function is as follows. AMP deaminase plays a critical role in energy metabolism. The polypeptide is AMP deaminase (ada1) (Schizosaccharomyces pombe (strain 972 / ATCC 24843) (Fission yeast)).